Consider the following 45-residue polypeptide: Rubredoxin-1 (45 aa).

Position 1 is an N-formylmethionine (Met1). The region spanning 1-45 is the Rubredoxin-like domain; the sequence is MQKYVCNVCGYEYDPAEHDNVPFDQLPDDWCCPVCGVSKDQFSPA. Cys6, Cys9, Cys32, and Cys35 together coordinate Fe cation.

The protein belongs to the rubredoxin family. It depends on Fe(3+) as a cofactor.

Its subcellular location is the cytoplasm. Functionally, rubredoxin is a small nonheme, iron protein lacking acid-labile sulfide. Its single Fe, chelated to 4 Cys, functions as an electron acceptor and may also stabilize the conformation of the molecule. Electron acceptor for cytoplasmic lactate dehydrogenase. This Desulfovibrio desulfuricans (strain ATCC 27774 / DSM 6949 / MB) protein is Rubredoxin-1 (rd1).